The sequence spans 589 residues: Probable ATP-dependent RNA helicase DDX59 (589 aa).

2 disordered regions span residues 1 to 36 and 48 to 98; these read MFVPRSLKLKRNSNDDLKSCEAKKSKPEAAGLQLEG and KEAV…SKTQ. Over residues 12-27 the composition is skewed to basic and acidic residues; the sequence is NSNDDLKSCEAKKSKP. Lys26 is covalently cross-linked (Glycyl lysine isopeptide (Lys-Gly) (interchain with G-Cter in SUMO2)). At Ser64 the chain carries Phosphoserine. Positions 80-91 are enriched in basic and acidic residues; it reads GVKDSHPSEEPV. The segment at 104–133 adopts an HIT-type zinc-finger fold; the sequence is GEPVCVVCGRYGEYICDKTDEDVCSLECKA. A phosphoserine mark is found at Ser156 and Ser160. The Q motif motif lies at 203-231; that stretch reads IDFEHCGFPETLNQNLKKSGYEVPTPIQM. Positions 234–375 constitute a Helicase ATP-binding domain; it reads IPVGLLGRDI…DQLLHNPVRI (142 aa). 247–254 lines the ATP pocket; that stretch reads ADTGSGKT. The DEAD box motif lies at 323-326; that stretch reads VKAD. A Helicase C-terminal domain is found at 399–549; it reads KKKKLFEILN…ILPPQLLNSP (151 aa).

Belongs to the DEAD box helicase family. DDX59 subfamily. Interacts (via HIT-type zinc finger) with the RUVBL1/RUVBL2 complex in the presence of ADP.

The protein resides in the cytoplasm. It localises to the nucleus. The catalysed reaction is ATP + H2O = ADP + phosphate + H(+). In Rattus norvegicus (Rat), this protein is Probable ATP-dependent RNA helicase DDX59 (Ddx59).